The chain runs to 63 residues: Large ribosomal subunit protein uL29 (63 aa).

This sequence belongs to the universal ribosomal protein uL29 family.

This Pseudoalteromonas atlantica (strain T6c / ATCC BAA-1087) protein is Large ribosomal subunit protein uL29.